Reading from the N-terminus, the 543-residue chain is MHPNYYLSPLAVAIALGIASPVKAADPIPLQKSSFSEVTQKFQLTLPGVMKGAVVSTNSLQFIRQHTDGNKVTHVRMQQQYAGFPVFGGYAILHSKNATPSLATAKSDEKMNGVIYDGLQAELGQPKPSFVKNASMALQQFKDKYANKQVSEDQVTPMIYIDEKHQAHWAYKVSVLVIHDDRIPERPTAIIDAETNKPFVQWDDVKTEKVQAKGMGFGGNRKIGEYQFGKDLPLLEITRDSSVEMCFMENTDVKVVDMGHKYYSNNKPMQFTCKETPDTQSTKTYYTGYSADGYDRDNGAASPTNDALYAGYVIKHMYHDWYGVEALTKSDGSPMQLVMRVHYGQGYENAYWDGKQMTFGDGDTMMYPLVSLGVGGHEVSHGFTEQHSGLEYFGQSGGMNESFSDMAAQAAEYYSVGKNSWQIGPEIMKEDSGYDALRYMDKPSRDGMSIDVADDYYGGLDVHYSSGVYNHLFYILANQPNWNLRMAFDVMVKANMDYWTPYSTFDEGGCGMLSAAKDLGYNLDDIKKSLSEVTINYQSCYVD.

Positions 1 to 24 (MHPNYYLSPLAVAIALGIASPVKA) are cleaved as a signal peptide. Residues 25–207 (ADPIPLQKSS…PFVQWDDVKT (183 aa)) constitute a propeptide that is removed on maturation. Residue H377 coordinates Zn(2+). E378 is a catalytic residue. 2 residues coordinate Zn(2+): H381 and E401. The Proton donor role is filled by H463.

This sequence belongs to the peptidase M4 family. The cofactor is Zn(2+).

It localises to the secreted. Its function is as follows. Cleaves collagen, gelatin, casein, alpha-1-antitrypsin, and bovine insulin. May play a role in the pathogenesis of legionnaires disease. In Legionella pneumophila, this protein is Zinc metalloproteinase.